Consider the following 158-residue polypeptide: Ribosomal RNA large subunit methyltransferase H (158 aa).

S-adenosyl-L-methionine-binding positions include Leu-72, Gly-103, and Leu-122–Leu-127.

Belongs to the RNA methyltransferase RlmH family. Homodimer.

The protein localises to the cytoplasm. It carries out the reaction pseudouridine(1915) in 23S rRNA + S-adenosyl-L-methionine = N(3)-methylpseudouridine(1915) in 23S rRNA + S-adenosyl-L-homocysteine + H(+). In terms of biological role, specifically methylates the pseudouridine at position 1915 (m3Psi1915) in 23S rRNA. The sequence is that of Ribosomal RNA large subunit methyltransferase H from Acidiphilium cryptum (strain JF-5).